Consider the following 312-residue polypeptide: tRNA dimethylallyltransferase (312 aa).

ATP is bound at residue 15-22 (GPTAAGKS). Substrate is bound at residue 17–22 (TAAGKS). An interaction with substrate tRNA region spans residues 40-43 (DSMQ).

This sequence belongs to the IPP transferase family. As to quaternary structure, monomer. It depends on Mg(2+) as a cofactor.

It catalyses the reaction adenosine(37) in tRNA + dimethylallyl diphosphate = N(6)-dimethylallyladenosine(37) in tRNA + diphosphate. Functionally, catalyzes the transfer of a dimethylallyl group onto the adenine at position 37 in tRNAs that read codons beginning with uridine, leading to the formation of N6-(dimethylallyl)adenosine (i(6)A). This chain is tRNA dimethylallyltransferase, found in Streptomyces avermitilis (strain ATCC 31267 / DSM 46492 / JCM 5070 / NBRC 14893 / NCIMB 12804 / NRRL 8165 / MA-4680).